The chain runs to 39 residues: Photosystem II reaction center protein J (39 aa).

A helical membrane pass occupies residues 9–29 (LWIIATFGGIAALTVVGLFIY).

This sequence belongs to the PsbJ family. As to quaternary structure, PSII is composed of 1 copy each of membrane proteins PsbA, PsbB, PsbC, PsbD, PsbE, PsbF, PsbH, PsbI, PsbJ, PsbK, PsbL, PsbM, PsbT, PsbX, PsbY, PsbZ, Psb30/Ycf12, at least 3 peripheral proteins of the oxygen-evolving complex and a large number of cofactors. It forms dimeric complexes.

The protein localises to the plastid. It localises to the chloroplast thylakoid membrane. One of the components of the core complex of photosystem II (PSII). PSII is a light-driven water:plastoquinone oxidoreductase that uses light energy to abstract electrons from H(2)O, generating O(2) and a proton gradient subsequently used for ATP formation. It consists of a core antenna complex that captures photons, and an electron transfer chain that converts photonic excitation into a charge separation. This chain is Photosystem II reaction center protein J, found in Guillardia theta (Cryptophyte).